The chain runs to 42 residues: MSNVGTTGRIPLWIIGTLAGTLVIGLLAIFFYGSYVGLGSSL.

Residues 10–30 (IPLWIIGTLAGTLVIGLLAIF) form a helical membrane-spanning segment.

Belongs to the PsbJ family. In terms of assembly, PSII is composed of 1 copy each of membrane proteins PsbA, PsbB, PsbC, PsbD, PsbE, PsbF, PsbH, PsbI, PsbJ, PsbK, PsbL, PsbM, PsbT, PsbX, PsbY, PsbZ, Psb30/Ycf12, at least 3 peripheral proteins of the oxygen-evolving complex and a large number of cofactors. It forms dimeric complexes.

The protein resides in the plastid. The protein localises to the chloroplast thylakoid membrane. One of the components of the core complex of photosystem II (PSII). PSII is a light-driven water:plastoquinone oxidoreductase that uses light energy to abstract electrons from H(2)O, generating O(2) and a proton gradient subsequently used for ATP formation. It consists of a core antenna complex that captures photons, and an electron transfer chain that converts photonic excitation into a charge separation. This chain is Photosystem II reaction center protein J, found in Chaetosphaeridium globosum (Charophycean green alga).